The following is a 201-amino-acid chain: ATP synthase subunit delta, chloroplastic (201 aa).

This sequence belongs to the ATPase delta chain family. In terms of assembly, F-type ATPases have 2 components, F(1) - the catalytic core - and F(0) - the membrane proton channel. F(1) has five subunits: alpha(3), beta(3), gamma(1), delta(1), epsilon(1). CF(0) has four main subunits: a(1), b(1), b'(1) and c(10-14). The alpha and beta chains form an alternating ring which encloses part of the gamma chain. F(1) is attached to F(0) by a central stalk formed by the gamma and epsilon chains, while a peripheral stalk is formed by the delta, b and b' chains.

It localises to the plastid. It is found in the chloroplast thylakoid membrane. In terms of biological role, f(1)F(0) ATP synthase produces ATP from ADP in the presence of a proton or sodium gradient. F-type ATPases consist of two structural domains, F(1) containing the extramembraneous catalytic core and F(0) containing the membrane proton channel, linked together by a central stalk and a peripheral stalk. During catalysis, ATP synthesis in the catalytic domain of F(1) is coupled via a rotary mechanism of the central stalk subunits to proton translocation. Functionally, this protein is part of the stalk that links CF(0) to CF(1). It either transmits conformational changes from CF(0) to CF(1) or is implicated in proton conduction. The protein is ATP synthase subunit delta, chloroplastic of Vaucheria litorea (Yellow-green alga).